The primary structure comprises 268 residues: Hydroxyethylthiazole kinase (268 aa).

Substrate is bound at residue M45. ATP is bound by residues R121 and T167. G194 provides a ligand contact to substrate.

Belongs to the Thz kinase family. Mg(2+) is required as a cofactor.

The enzyme catalyses 5-(2-hydroxyethyl)-4-methylthiazole + ATP = 4-methyl-5-(2-phosphooxyethyl)-thiazole + ADP + H(+). It participates in cofactor biosynthesis; thiamine diphosphate biosynthesis; 4-methyl-5-(2-phosphoethyl)-thiazole from 5-(2-hydroxyethyl)-4-methylthiazole: step 1/1. Catalyzes the phosphorylation of the hydroxyl group of 4-methyl-5-beta-hydroxyethylthiazole (THZ). The sequence is that of Hydroxyethylthiazole kinase from Bacillus thuringiensis subsp. konkukian (strain 97-27).